Consider the following 357-residue polypeptide: Arginine kinase (357 aa).

The Phosphagen kinase N-terminal domain occupies 9–91 (KLEAGFKKLQ…FDPIIDDYHG (83 aa)). 64-68 (GVGIY) contributes to the substrate binding site. The 238-residue stretch at 119–356 (FIISTRVRCG…LEMIKMEKAA (238 aa)) folds into the Phosphagen kinase C-terminal domain. ATP contacts are provided by residues 122–126 (STRVR) and His185. Substrate is bound at residue Glu225. Arg229 contributes to the ATP binding site. Residue Cys271 participates in substrate binding. ATP is bound by residues 280-284 (RASVH) and 309-314 (RGTRGE). Glu314 provides a ligand contact to substrate.

It belongs to the ATP:guanido phosphotransferase family. Monomer.

The protein resides in the cytoplasm. It catalyses the reaction L-arginine + ATP = N(omega)-phospho-L-arginine + ADP + H(+). Catalyzes the reversible transfer of the terminal phosphoryl group of ATP to L-arginine. The chain is Arginine kinase from Limulus polyphemus (Atlantic horseshoe crab).